An 893-amino-acid polypeptide reads, in one-letter code: NEDD4-binding protein 1 (893 aa).

The KH-like domain maps to 59–143; that stretch reads QEAVHSAKEY…IQQFVKLFES (85 aa). The interval 213 to 243 is disordered; that stretch reads EYTQSAATGPSSARDEVVVQEDSRNKARTPV. Residues 214-223 are compositionally biased toward polar residues; sequence YTQSAATGPS. The segment covering 225-237 has biased composition (basic and acidic residues); the sequence is ARDEVVVQEDSRN. Phosphothreonine is present on Thr241. Residues Ser257, Ser269, and Ser299 each carry the phosphoserine modification. Disordered regions lie at residues 273–339, 394–433, and 472–564; these read DALS…DGKD, RDFP…QSHT, and IWGS…PPLP. 2 stretches are compositionally biased toward polar residues: residues 405–433 and 523–537; these read ASQS…QSHT and GFQQ…NNTK. Residues 551 to 564 are compositionally biased toward pro residues; that stretch reads QPKPNYPPLSPPLP. Residue Ser560 is modified to Phosphoserine. The RNase NYN domain maps to 615–767; sequence LKHIVIDGSN…LGRNGPRLEE (153 aa). A disordered region spans residues 793 to 820; it reads PGFRSPSTQVANNSHQPPPRIQTSSSPW. Over residues 797–820 the composition is skewed to polar residues; the sequence is SPSTQVANNSHQPPPRIQTSSSPW. Residues 846–893 form a coCUN region; sequence RSSAETSELREALLKIFPDSEQKLKIDQILAAHPYMKDLNALSALVLD.

Belongs to the N4BP1 family. In terms of assembly, interacts with NEDD4. Interacts with ITCH (via WW domain 2). In terms of processing, proteolytically cleaved by CASP8 downstream of TLR3 or TLR4, leading to its inactivation. Mainly cleaved at Asp-488 by CASP8. Cleaved by caspase-like protein MALT1, leading to its inactivation. Mono- and polyubiquitinated on the CoCUN region. Monoubiquitinated by NEDD4. Polyubiquitinated, leading to its degradation by the proteasome. Sumoylated with SUMO1, abrogating polyubiquitination and subsequent degradation. Desumoylated by SENP1, leading to accumulation in PML nuclear bodies.

It localises to the cytoplasm. Its subcellular location is the cytosol. It is found in the nucleus. The protein localises to the nucleolus. The protein resides in the PML body. Proteolytic cleavage by CASP8 or MALT1 leads to its inactivation. Functionally, potent suppressor of cytokine production that acts as a regulator of innate immune signaling and inflammation. Acts as a key negative regulator of select cytokine and chemokine responses elicited by TRIF-independent Toll-like receptors (TLRs), thereby limiting inflammatory cytokine responses to minor insults. In response to more threatening pathogens, cleaved by CASP8 downstream of TLR3 or TLR4, leading to its inactivation, thereby allowing production of inflammatory cytokines. Acts as a restriction factor against some viruses: restricts viral replication by binding to mRNA viruses and mediating their degradation via its ribonuclease activity. Also acts as an inhibitor of the E3 ubiquitin-protein ligase ITCH: acts by interacting with the second WW domain of ITCH, leading to compete with ITCH's substrates and impairing ubiquitination of substrates. This is NEDD4-binding protein 1 from Mus musculus (Mouse).